The following is an 87-amino-acid chain: Small ribosomal subunit protein bS20 (87 aa).

The protein belongs to the bacterial ribosomal protein bS20 family.

Functionally, binds directly to 16S ribosomal RNA. This is Small ribosomal subunit protein bS20 from Geobacter sulfurreducens (strain ATCC 51573 / DSM 12127 / PCA).